The following is a 455-amino-acid chain: Exodeoxyribonuclease 7 large subunit (455 aa).

Belongs to the XseA family. In terms of assembly, heterooligomer composed of large and small subunits.

It is found in the cytoplasm. The enzyme catalyses Exonucleolytic cleavage in either 5'- to 3'- or 3'- to 5'-direction to yield nucleoside 5'-phosphates.. Its function is as follows. Bidirectionally degrades single-stranded DNA into large acid-insoluble oligonucleotides, which are then degraded further into small acid-soluble oligonucleotides. In Escherichia fergusonii (strain ATCC 35469 / DSM 13698 / CCUG 18766 / IAM 14443 / JCM 21226 / LMG 7866 / NBRC 102419 / NCTC 12128 / CDC 0568-73), this protein is Exodeoxyribonuclease 7 large subunit.